Consider the following 370-residue polypeptide: UDP-galactose transporter homolog 1 (370 aa).

10 helical membrane passes run 22–42 (ALTLIICVCGLYGTFLTWSIL), 62–82 (IIINLIQALFASIIGFIYNYV), 115–135 (CNVLKFMILISITSSIASPIG), 145–165 (LAYLLAKSCKLIPVMIVHFIF), 175–195 (YLVAGLVTLGVILFTMAHVTT), 204–224 (TLLGLTYLIGSMILDGLTNST), 242–262 (LMSLLNLFIFIWTSLYTIIFH), 280–300 (LIDIIGFAICGAIGQVFIFII), 307–327 (IILITATVTRKMLSMILSVIL), and 333–353 (SWEQWVGVGLVFGGIGLEAFI).

The protein belongs to the nucleotide-sugar transporter family. SLC35B subfamily.

It is found in the endoplasmic reticulum membrane. In terms of biological role, may be involved in specific transport of UDP-Gal from the cytosol to the Golgi lumen. Involved in the maintenance of optimal conditions for the folding of secretory pathway proteins in the endoplasmic reticulum. The polypeptide is UDP-galactose transporter homolog 1 (HUT1) (Candida albicans (strain SC5314 / ATCC MYA-2876) (Yeast)).